The chain runs to 1791 residues: Protein TIC 214 (1791 aa).

The next 6 helical transmembrane spans lie at 19-39, 68-88, 91-111, 133-153, 176-196, and 227-247; these read IINS…FSIG, FIAG…HLAL, PHTI…WNNH, VFLN…SSML, VGWL…LVWI, and IFSI…PSPI. A disordered region spans residues 1492-1511; the sequence is ASQVELESDKENKKNPESAL. Over residues 1498 to 1511 the composition is skewed to basic and acidic residues; the sequence is ESDKENKKNPESAL.

This sequence belongs to the TIC214 family. Part of the Tic complex.

The protein resides in the plastid. It is found in the chloroplast inner membrane. Functionally, involved in protein precursor import into chloroplasts. May be part of an intermediate translocation complex acting as a protein-conducting channel at the inner envelope. This is Protein TIC 214 from Barbarea verna (Land cress).